A 470-amino-acid chain; its full sequence is 3-isopropylmalate dehydratase large subunit (470 aa).

Residues Cys-347, Cys-407, and Cys-410 each coordinate [4Fe-4S] cluster.

This sequence belongs to the aconitase/IPM isomerase family. LeuC type 1 subfamily. As to quaternary structure, heterodimer of LeuC and LeuD. Requires [4Fe-4S] cluster as cofactor.

The enzyme catalyses (2R,3S)-3-isopropylmalate = (2S)-2-isopropylmalate. It functions in the pathway amino-acid biosynthesis; L-leucine biosynthesis; L-leucine from 3-methyl-2-oxobutanoate: step 2/4. Its function is as follows. Catalyzes the isomerization between 2-isopropylmalate and 3-isopropylmalate, via the formation of 2-isopropylmaleate. The protein is 3-isopropylmalate dehydratase large subunit of Shewanella amazonensis (strain ATCC BAA-1098 / SB2B).